A 149-amino-acid polypeptide reads, in one-letter code: UPF0178 protein Lmo1456 (149 aa).

This sequence belongs to the UPF0178 family.

The sequence is that of UPF0178 protein Lmo1456 from Listeria monocytogenes serovar 1/2a (strain ATCC BAA-679 / EGD-e).